Here is a 109-residue protein sequence, read N- to C-terminus: FAD assembly factor SdhE (109 aa).

The disordered stretch occupies residues 1 to 22 (MQDNFTASSPSSSSSASGVAED). Residues 7–17 (ASSPSSSSSAS) show a composition bias toward low complexity.

The protein belongs to the SdhE FAD assembly factor family.

It localises to the cytoplasm. In terms of biological role, an FAD assembly protein, which accelerates covalent attachment of the cofactor into other proteins. Plays an essential role in the assembly of succinate dehydrogenase (SDH, respiratory complex II), an enzyme complex that is a component of both the tricarboxylic acid cycle and the electron transport chain, and which couples the oxidation of succinate to fumarate with the reduction of ubiquinone (coenzyme Q) to ubiquinol. Required for flavinylation of SdhA, when the SDH operon and this gene are overexpressed in G.oxydans. Flavinylation of SdhA is detected only in the presence of sdhE. The protein is FAD assembly factor SdhE of Acetobacter pasteurianus (strain NBRC 105184 / IFO 3283-01).